The following is a 218-amino-acid chain: MTSSSSSSGSPCGACKFLRRKCAKGCVFAPYFCHEQGASHFAAIHKVFGASNASKLLSHLPISDRCEAAITISYEAQARLQDPIYGCVSHIFALQQQVVNLQAELEILKQQAAQSMIFADSPTSENPNSYYGDTTKAPYHHDHQNIYHHHDQTHLVYQTGSSGTVQHGDATESSYHNETSSGMGEFSIYSDLEQHLNTFNQDHLKELQSANFGYISFS.

Residues serine 10–alanine 112 form the LOB domain.

Belongs to the LOB domain-containing protein family. Expressed in roots.

In terms of biological role, involved in lateral root formation. Regulated by the transcriptional activators ARF7 and ARF19. This is LOB domain-containing protein 29 (LBD29) from Arabidopsis thaliana (Mouse-ear cress).